A 443-amino-acid polypeptide reads, in one-letter code: Tubulin beta-1 chain (443 aa).

GTP contacts are provided by Gln11, Glu69, Ser138, Gly142, Thr143, Gly144, Asn204, and Asn226. Glu69 contacts Mg(2+). Residues Gln424 to Ala443 form a disordered region. Acidic residues predominate over residues Gly434–Ala443.

This sequence belongs to the tubulin family. As to quaternary structure, dimer of alpha and beta chains. A typical microtubule is a hollow water-filled tube with an outer diameter of 25 nm and an inner diameter of 15 nM. Alpha-beta heterodimers associate head-to-tail to form protofilaments running lengthwise along the microtubule wall with the beta-tubulin subunit facing the microtubule plus end conferring a structural polarity. Microtubules usually have 13 protofilaments but different protofilament numbers can be found in some organisms and specialized cells. The cofactor is Mg(2+).

It localises to the cytoplasm. Its subcellular location is the cytoskeleton. Tubulin is the major constituent of microtubules, a cylinder consisting of laterally associated linear protofilaments composed of alpha- and beta-tubulin heterodimers. Microtubules grow by the addition of GTP-tubulin dimers to the microtubule end, where a stabilizing cap forms. Below the cap, tubulin dimers are in GDP-bound state, owing to GTPase activity of alpha-tubulin. The protein is Tubulin beta-1 chain (TUBB1) of Anemia phyllitidis (Fern).